Here is a 476-residue protein sequence, read N- to C-terminus: Ribulose bisphosphate carboxylase large chain (476 aa).

Residues Asn124 and Thr174 each contribute to the substrate site. Residue Lys176 is the Proton acceptor of the active site. Residue Lys178 coordinates substrate. 3 residues coordinate Mg(2+): Lys202, Asp204, and Glu205. The residue at position 202 (Lys202) is an N6-carboxylysine. The Proton acceptor role is filled by His295. Substrate-binding residues include Arg296, His328, and Ser380.

Belongs to the RuBisCO large chain family. Type I subfamily. Heterohexadecamer of 8 large chains and 8 small chains; disulfide-linked. The disulfide link is formed within the large subunit homodimers. Forms complexes of many stoichiometries with Raf1 with and without RbcS. RuBisCO interacts with the C-terminus of CcmM. Mg(2+) is required as a cofactor. Post-translationally, the disulfide bond which can form in the large chain dimeric partners within the hexadecamer appears to be associated with oxidative stress and protein turnover.

The protein resides in the carboxysome. It carries out the reaction 2 (2R)-3-phosphoglycerate + 2 H(+) = D-ribulose 1,5-bisphosphate + CO2 + H2O. It catalyses the reaction D-ribulose 1,5-bisphosphate + O2 = 2-phosphoglycolate + (2R)-3-phosphoglycerate + 2 H(+). Functionally, ruBisCO catalyzes two reactions: the carboxylation of D-ribulose 1,5-bisphosphate, the primary event in carbon dioxide fixation, as well as the oxidative fragmentation of the pentose substrate in the photorespiration process. Both reactions occur simultaneously and in competition at the same active site. The protein is Ribulose bisphosphate carboxylase large chain of Nostoc sp. (strain PCC 7120 / SAG 25.82 / UTEX 2576).